A 432-amino-acid chain; its full sequence is Serine--tRNA ligase (432 aa).

238-240 (TAE) contributes to the L-serine binding site. 269-271 (RSE) contributes to the ATP binding site. An L-serine-binding site is contributed by Glu-292. 357 to 360 (EISS) contributes to the ATP binding site. An L-serine-binding site is contributed by Ser-393.

Belongs to the class-II aminoacyl-tRNA synthetase family. Type-1 seryl-tRNA synthetase subfamily. Homodimer. The tRNA molecule binds across the dimer.

The protein resides in the cytoplasm. The enzyme catalyses tRNA(Ser) + L-serine + ATP = L-seryl-tRNA(Ser) + AMP + diphosphate + H(+). It catalyses the reaction tRNA(Sec) + L-serine + ATP = L-seryl-tRNA(Sec) + AMP + diphosphate + H(+). The protein operates within aminoacyl-tRNA biosynthesis; selenocysteinyl-tRNA(Sec) biosynthesis; L-seryl-tRNA(Sec) from L-serine and tRNA(Sec): step 1/1. Its function is as follows. Catalyzes the attachment of serine to tRNA(Ser). Is also able to aminoacylate tRNA(Sec) with serine, to form the misacylated tRNA L-seryl-tRNA(Sec), which will be further converted into selenocysteinyl-tRNA(Sec). The polypeptide is Serine--tRNA ligase (Hyphomonas neptunium (strain ATCC 15444)).